The following is a 149-amino-acid chain: L-alanine exporter AlaE (149 aa).

The next 4 helical transmembrane spans lie at 17–37 (FAMV…ISGM), 43–63 (LASR…YGVF), 86–106 (LTAY…TVGA), and 111–131 (IITA…FYGY).

Belongs to the AlaE exporter family.

The protein resides in the cell inner membrane. Exports L-alanine. The sequence is that of L-alanine exporter AlaE from Aliivibrio salmonicida (strain LFI1238) (Vibrio salmonicida (strain LFI1238)).